The sequence spans 258 residues: Snake venom serine protease 5 (258 aa).

The signal sequence occupies residues 1–18; sequence MVLIRVLANLLILQLSYA. A propeptide spanning residues 19–24 is cleaved from the precursor; sequence QKSSEL. The region spanning 25-249 is the Peptidase S1 domain; the sequence is VVGGRPCNIN…HLDWIQNIIA (225 aa). Intrachain disulfides connect Cys31–Cys163, Cys50–Cys66, Cys98–Cys256, Cys142–Cys210, Cys174–Cys189, and Cys200–Cys225. N-linked (GlcNAc...) asparagine glycosylation occurs at Asn44. The active-site Charge relay system is the His65. A glycan (N-linked (GlcNAc...) asparagine) is linked at Asn103. Asp110 serves as the catalytic Charge relay system. Asn121, Asn122, Asn154, and Asn170 each carry an N-linked (GlcNAc...) asparagine glycan. The active-site Charge relay system is the Ser204. N-linked (GlcNAc...) asparagine glycosylation occurs at Asn251.

This sequence belongs to the peptidase S1 family. Snake venom subfamily. In terms of assembly, monomer. As to expression, expressed by the venom gland.

Its subcellular location is the secreted. Snake venom serine protease that may act in the hemostasis system of the prey. This Trimeresurus stejnegeri (Chinese green tree viper) protein is Snake venom serine protease 5.